A 498-amino-acid polypeptide reads, in one-letter code: Glycerol kinase (498 aa).

An ADP-binding site is contributed by threonine 12. Residues threonine 12, threonine 13, and serine 14 each coordinate ATP. A sn-glycerol 3-phosphate-binding site is contributed by threonine 12. Residue arginine 16 coordinates ADP. Sn-glycerol 3-phosphate-binding residues include arginine 82, glutamate 83, tyrosine 134, and aspartate 244. Glycerol is bound by residues arginine 82, glutamate 83, tyrosine 134, aspartate 244, and glutamine 245. Residues threonine 266 and glycine 310 each contribute to the ADP site. Residues threonine 266, glycine 310, glutamine 314, and glycine 411 each coordinate ATP. ADP-binding residues include glycine 411 and asparagine 415.

It belongs to the FGGY kinase family.

It catalyses the reaction glycerol + ATP = sn-glycerol 3-phosphate + ADP + H(+). It participates in polyol metabolism; glycerol degradation via glycerol kinase pathway; sn-glycerol 3-phosphate from glycerol: step 1/1. Its activity is regulated as follows. Inhibited by fructose 1,6-bisphosphate (FBP). Its function is as follows. Key enzyme in the regulation of glycerol uptake and metabolism. Catalyzes the phosphorylation of glycerol to yield sn-glycerol 3-phosphate. The polypeptide is Glycerol kinase (Chloroflexus aggregans (strain MD-66 / DSM 9485)).